The following is a 509-amino-acid chain: Protein disulfide-isomerase (509 aa).

The signal sequence occupies residues 1-18; sequence MLRRAVLCLALAVTAGWA. The Thioredoxin 1 domain occupies 19 to 135; that stretch reads WAAEEEDNVL…IVNWLKKRTG (117 aa). Catalysis depends on nucleophile residues C54 and C57. C54 and C57 are disulfide-bonded. An N6-succinyllysine mark is found at K223 and K272. 2 positions are modified to phosphoserine: S332 and S358. Positions 347–476 constitute a Thioredoxin 2 domain; that stretch reads FLEGKIKPHL…FKKFLESGGQ (130 aa). Active-site nucleophile residues include C398 and C401. A disulfide bridge connects residues C398 and C401. S428 bears the Phosphoserine mark. The tract at residues 471–509 is disordered; the sequence is LESGGQDGAGDEDGLEDLEEAEEPDLEEDDDQKAVRDEL. Residues 479 to 501 are compositionally biased toward acidic residues; the sequence is AGDEDGLEDLEEAEEPDLEEDDD. The Prevents secretion from ER motif lies at 506 to 509; the sequence is RDEL.

Belongs to the protein disulfide isomerase family. As to quaternary structure, heterodimer; heterodimerizes with the protein microsomal triglyceride transfer MTTP. Homodimer. Monomers and homotetramers may also occur. Interacts with P4HA2, forming a heterotetramer consisting of 2 alpha subunits (P4HA2) and 2 beta (P4HB), where P4HB plays the role of a structural subunit; this tetramer catalyzes the formation of 4-hydroxyproline in collagen. Also constitutes the structural subunit of the microsomal triacylglycerol transfer protein MTTP in mammalian cells. Stabilizes both enzymes and retain them in the ER without contributing to the catalytic activity. Binds UBQLN1. Interacts with ERO1B. Interacts with ILDR2. Interacts with ERN1/IRE1A (via N-terminus); the interaction is enhanced by phosphorylation of P4HB by FAM20C in response to endoplasmic reticulum stress and results in attenuation of ERN1 activity. Post-translationally, phosphorylation of Ser-358 by FAM20C is induced by endoplasmic reticulum stress and results in a functional switch from oxidoreductase to molecular chaperone. It also promotes interaction with ERN1.

It is found in the endoplasmic reticulum. Its subcellular location is the endoplasmic reticulum lumen. The protein localises to the melanosome. It localises to the cell membrane. It carries out the reaction Catalyzes the rearrangement of -S-S- bonds in proteins.. This multifunctional protein catalyzes the formation, breakage and rearrangement of disulfide bonds. At the cell surface, seems to act as a reductase that cleaves disulfide bonds of proteins attached to the cell. May therefore cause structural modifications of exofacial proteins. Inside the cell, seems to form/rearrange disulfide bonds of nascent proteins. At high concentrations and following phosphorylation by FAM20C, functions as a chaperone that inhibits aggregation of misfolded proteins. At low concentrations, facilitates aggregation (anti-chaperone activity). May be involved with other chaperones in the structural modification of the TG precursor in hormone biogenesis. Also acts as a structural subunit of various enzymes such as prolyl 4-hydroxylase and microsomal triacylglycerol transfer protein MTTP. Receptor for LGALS9; the interaction retains P4HB at the cell surface of Th2 T helper cells, increasing disulfide reductase activity at the plasma membrane, altering the plasma membrane redox state and enhancing cell migration. This chain is Protein disulfide-isomerase (P4HB), found in Oryctolagus cuniculus (Rabbit).